A 264-amino-acid polypeptide reads, in one-letter code: Cell cycle regulator CcrZ (264 aa).

ATP is bound by residues Phe-32, Trp-70, and Gly-73. The short motif at 157 to 164 is the Brenner's motif [HXDhX3N] element; sequence HGDVRHSN. The active-site Proton acceptor is Asp-159. Positions 173–196 match the APH motif; the sequence is IYLVDWDSVRLTDRMFDVAHMLCH.

The protein belongs to the aminoglycoside phosphotransferase family. Monomer in solution. Interacts with DnaA (via domains I (1-82) and III (111-326)). Interacts with DnaB. Interacts with FtsZ; the interaction is direct and ensures correct localization during the cell cycle.

The protein localises to the cytoplasm. The catalysed reaction is D-ribose + ATP = D-ribose 5-phosphate + ADP + H(+). The enzyme catalyses 2-deoxy-D-ribose + ATP = 2-deoxy-D-ribose 5-phosphate + ADP + H(+). In terms of biological role, plays a role in cell cycle regulation and chromosome integrity. Activates DnaA-dependent chromosomal DNA replication initiation ensuring that the chromosome is replicated at the right time during the cell cycle. May regulate replication initiation through phosphorylation of a possible second messenger or metabolite, and by interacting with replication initiation proteins. Has ATPase activity with D-ribose and 2-deoxy-D-ribose in vitro, but not with choline. Involved in DNA damage response. The polypeptide is Cell cycle regulator CcrZ (Streptococcus pneumoniae serotype 2 (strain D39 / NCTC 7466)).